The sequence spans 33 residues: Protamine TP16 (33 aa).

Residues 1–33 form a disordered region; the sequence is MPRRRRSSSRPVRRRRRARVSRRRRRRGRRRRR.

Testis.

The protein resides in the nucleus. Its subcellular location is the chromosome. In terms of biological role, protamines substitute for histones in the chromatin of sperm during the haploid phase of spermatogenesis. They compact sperm DNA into a highly condensed, stable and inactive complex. The chain is Protamine TP16 from Oncorhynchus mykiss (Rainbow trout).